A 636-amino-acid polypeptide reads, in one-letter code: Chaperone protein DnaK (636 aa).

Threonine 203 carries the post-translational modification Phosphothreonine; by autocatalysis. Positions 602–636 are disordered; sequence VYGKQQEGAPAQEEPSAEGKKADDEGTVEGEFREV. Basic and acidic residues predominate over residues 618–636; the sequence is AEGKKADDEGTVEGEFREV.

It belongs to the heat shock protein 70 family.

Acts as a chaperone. This chain is Chaperone protein DnaK, found in Dehalococcoides mccartyi (strain ATCC BAA-2100 / JCM 16839 / KCTC 5957 / BAV1).